The chain runs to 161 residues: MPSFDVVSEANMIEVKNAVEQSNKEISTRFDFKGSDARVEQKERELTLYADDDFKLGQVKDVLIGKMAKRNVDVRFLDYGKIEKIGGDKVKQVVTIKKGVSGDLAKKVVRIVKDSKIKVQASIQGDAVRVSGAKRDDLQSTIALLRKEVTDTPLDFNNFRD.

The protein belongs to the YajQ family.

Its function is as follows. Nucleotide-binding protein. This chain is Nucleotide-binding protein BMASAVP1_A0673, found in Burkholderia mallei (strain SAVP1).